A 551-amino-acid chain; its full sequence is 2-(3-amino-3-carboxypropyl)histidine synthase subunit 2 (551 aa).

[4Fe-4S] cluster contacts are provided by cysteine 116, cysteine 137, and cysteine 371.

This sequence belongs to the DPH1/DPH2 family. DPH2 subfamily. Component of the 2-(3-amino-3-carboxypropyl)histidine synthase complex composed of DPH1, DPH2, DPH3 and a NADH-dependent reductase, predominantly CBR1. [4Fe-4S] cluster serves as cofactor.

Its subcellular location is the cytoplasm. It functions in the pathway protein modification; peptidyl-diphthamide biosynthesis. Its function is as follows. Required for the first step of diphthamide biosynthesis, a post-translational modification of histidine which occurs in elongation factor 2. DPH1 and DPH2 transfer a 3-amino-3-carboxypropyl (ACP) group from S-adenosyl-L-methionine (SAM) to a histidine residue, the reaction is assisted by a reduction system comprising DPH3 and a NADH-dependent reductase, predominantly CBR1. Facilitates the reduction of the catalytic iron-sulfur cluster found in the DPH1 subunit. The sequence is that of 2-(3-amino-3-carboxypropyl)histidine synthase subunit 2 (DPH2) from Candida glabrata (strain ATCC 2001 / BCRC 20586 / JCM 3761 / NBRC 0622 / NRRL Y-65 / CBS 138) (Yeast).